The primary structure comprises 308 residues: Ribosomal RNA small subunit methyltransferase H (308 aa).

S-adenosyl-L-methionine is bound by residues 33–35 (GGH), aspartate 52, phenylalanine 78, aspartate 99, and glutamine 106. Residues 289–308 (EEIETNSRSRSAKLRVAEKL) form a disordered region.

It belongs to the methyltransferase superfamily. RsmH family.

The protein resides in the cytoplasm. The catalysed reaction is cytidine(1402) in 16S rRNA + S-adenosyl-L-methionine = N(4)-methylcytidine(1402) in 16S rRNA + S-adenosyl-L-homocysteine + H(+). Specifically methylates the N4 position of cytidine in position 1402 (C1402) of 16S rRNA. This is Ribosomal RNA small subunit methyltransferase H from Thermoanaerobacter sp. (strain X514).